The primary structure comprises 274 residues: Large ribosomal subunit protein uL2 (274 aa).

Disordered stretches follow at residues 28-54 (APHAPLLEKKSKSGGRNNNGRITTRHI) and 224-274 (VAMN…RRRK). Over residues 263–274 (KRTDKMIVRRRK) the composition is skewed to basic and acidic residues.

The protein belongs to the universal ribosomal protein uL2 family. Part of the 50S ribosomal subunit. Forms a bridge to the 30S subunit in the 70S ribosome.

Functionally, one of the primary rRNA binding proteins. Required for association of the 30S and 50S subunits to form the 70S ribosome, for tRNA binding and peptide bond formation. It has been suggested to have peptidyltransferase activity; this is somewhat controversial. Makes several contacts with the 16S rRNA in the 70S ribosome. The protein is Large ribosomal subunit protein uL2 of Pseudomonas savastanoi pv. phaseolicola (strain 1448A / Race 6) (Pseudomonas syringae pv. phaseolicola (strain 1448A / Race 6)).